Here is a 112-residue protein sequence, read N- to C-terminus: UPF0102 protein JJD26997_0163 (112 aa).

It belongs to the UPF0102 family.

This Campylobacter jejuni subsp. doylei (strain ATCC BAA-1458 / RM4099 / 269.97) protein is UPF0102 protein JJD26997_0163.